We begin with the raw amino-acid sequence, 107 residues long: Proteinase inhibitor I-B (107 aa).

A signal peptide spans 1 to 22 (MVKFAHVVAFLLLASLFQPLTA). A propeptide spanning residues 23-39 (RDLEINVLQLDVSQSGC) is cleaved from the precursor.

This sequence belongs to the protease inhibitor I13 (potato type I serine protease inhibitor) family.

It is found in the secreted. This chain is Proteinase inhibitor I-B (TIMPA), found in Nicotiana tabacum (Common tobacco).